The chain runs to 128 residues: Small ribosomal subunit protein uS11 (128 aa).

Belongs to the universal ribosomal protein uS11 family. Part of the 30S ribosomal subunit. Interacts with proteins S7 and S18. Binds to IF-3.

Located on the platform of the 30S subunit, it bridges several disparate RNA helices of the 16S rRNA. Forms part of the Shine-Dalgarno cleft in the 70S ribosome. This Porphyromonas gingivalis (strain ATCC BAA-308 / W83) protein is Small ribosomal subunit protein uS11.